The following is a 372-amino-acid chain: E3 ubiquitin-protein ligase RNF34 (372 aa).

The segment at 56-107 (EGPNIVCKACGLSFSVFRKKHVCCDCKKDFCSVCSVLQENLRRCSTCHLLQE) adopts an FYVE-type zinc-finger fold. Positions 115–134 (LMRLKVKDLRQYLILRNIPT) constitute an SAP 1 domain. The residue at position 169 (Ser-169) is a Phosphoserine. A disordered region spans residues 194–252 (QGELMDGDQTSRSGVPAQVQSEITSANTEDDDDDDDEDDDDEEENAEDQNPGLSKERVR). Residues 201-220 (DQTSRSGVPAQVQSEITSAN) are compositionally biased toward polar residues. Residues 221-240 (TEDDDDDDDEDDDDEEENAE) are compositionally biased toward acidic residues. 2 positions are modified to phosphoserine: Ser-254 and Ser-256. Residues 264-278 (VEGMSVRQLKEILAR) form the SAP 2 domain. The RING-type zinc finger occupies 325–360 (CRICMDAVIDCVLLECGHMVTCTKCGKRMSECPICR).

As to quaternary structure, interacts with CASP8 and CASP10. Interacts with p53/TP53; involved in p53/TP53 ubiquitination. Interacts (via RING-type zinc finger) with MDM2; the interaction stabilizes MDM2. Interacts (via RING-type zinc finger) with PPARGC1A. Interacts with NOD1. In terms of processing, autoubiquitinated (in vitro). Proteolytically cleaved by caspases upon induction of apoptosis by TNF.

The protein resides in the cell membrane. The protein localises to the endomembrane system. Its subcellular location is the nucleus. It localises to the nucleus speckle. It is found in the cytoplasm. The protein resides in the cytosol. The catalysed reaction is S-ubiquitinyl-[E2 ubiquitin-conjugating enzyme]-L-cysteine + [acceptor protein]-L-lysine = [E2 ubiquitin-conjugating enzyme]-L-cysteine + N(6)-ubiquitinyl-[acceptor protein]-L-lysine.. It functions in the pathway protein modification; protein ubiquitination. Its function is as follows. E3 ubiquitin-protein ligase that regulates several biological processes through the ubiquitin-mediated proteasomal degradation of various target proteins. Ubiquitinates the caspases CASP8 and CASP10, promoting their proteasomal degradation, to negatively regulate cell death downstream of death domain receptors in the extrinsic pathway of apoptosis. May mediate 'Lys-48'-linked polyubiquitination of RIPK1 and its subsequent proteasomal degradation thereby indirectly regulating the tumor necrosis factor-mediated signaling pathway. Negatively regulates p53/TP53 through its direct ubiquitination and targeting to proteasomal degradation. Indirectly, may also negatively regulate p53/TP53 through ubiquitination and degradation of SFN. Mediates PPARGC1A proteasomal degradation probably through ubiquitination thereby indirectly regulating the metabolism of brown fat cells. Possibly involved in innate immunity, through 'Lys-48'-linked polyubiquitination of NOD1 and its subsequent proteasomal degradation. The protein is E3 ubiquitin-protein ligase RNF34 (RNF34) of Pongo abelii (Sumatran orangutan).